The chain runs to 475 residues: Methionine aminopeptidase 2-1 (475 aa).

A compositionally biased stretch (basic and acidic residues) spans 1-12; it reads MGSKSPEGHRQT. The interval 1–97 is disordered; that stretch reads MGSKSPEGHR…LKQSSPPRVL (97 aa). Acidic residues predominate over residues 44 to 57; the sequence is NLDDDNDDDGEANE. Positions 70 to 83 are enriched in basic residues; sequence KKKKRKRSKKKTKK. Position 211 (His211) interacts with substrate. 3 residues coordinate a divalent metal cation: Asp232, Asp243, and His312. Position 320 (His320) interacts with substrate. Residues Glu345 and Glu456 each contribute to the a divalent metal cation site.

It belongs to the peptidase M24A family. Methionine aminopeptidase eukaryotic type 2 subfamily. Co(2+) is required as a cofactor. The cofactor is Zn(2+). Requires Mn(2+) as cofactor. Fe(2+) serves as cofactor.

The protein resides in the cytoplasm. The enzyme catalyses Release of N-terminal amino acids, preferentially methionine, from peptides and arylamides.. Cotranslationally removes the N-terminal methionine from nascent proteins. The N-terminal methionine is often cleaved when the second residue in the primary sequence is small and uncharged (Met-Ala-, Cys, Gly, Pro, Ser, Thr, or Val). The protein is Methionine aminopeptidase 2-1 of Aspergillus niger (strain ATCC MYA-4892 / CBS 513.88 / FGSC A1513).